We begin with the raw amino-acid sequence, 323 residues long: GDP-mannose 4,6-dehydratase (323 aa).

NADP(+) is bound by residues 11-14 (TGQD), Arg-36, 59-60 (DM), and 81-85 (LAAQS). The active site involves Thr-126. Residues Glu-128 and Tyr-150 each act as nucleophile in the active site. Lys-154, His-180, and Arg-185 together coordinate NADP(+).

Belongs to the NAD(P)-dependent epimerase/dehydratase family. GDP-mannose 4,6-dehydratase subfamily. In terms of assembly, homotetramer. Requires NADP(+) as cofactor.

The catalysed reaction is GDP-alpha-D-mannose = GDP-4-dehydro-alpha-D-rhamnose + H2O. Its pathway is bacterial outer membrane biogenesis; lipopolysaccharide biosynthesis. Catalyzes the conversion of GDP-D-mannose to GDP-4-dehydro-6-deoxy-D-mannose. The chain is GDP-mannose 4,6-dehydratase from Pseudomonas aeruginosa (strain ATCC 15692 / DSM 22644 / CIP 104116 / JCM 14847 / LMG 12228 / 1C / PRS 101 / PAO1).